Consider the following 536-residue polypeptide: Mitogen-activated protein kinase kinase kinase mom-4 (536 aa).

Residues Met1–Pro20 show a composition bias toward low complexity. The disordered stretch occupies residues Met1–Gly34. The Protein kinase domain occupies Asn51–Leu305. ATP-binding positions include Leu57–Val65 and Lys84. The active-site Proton acceptor is Asp176. The disordered stretch occupies residues Ser314–Glu438. Polar residues-rich tracts occupy residues Val315 to Pro325 and Asn350 to Gly366. Residues Lys405 to Glu438 show a composition bias toward basic and acidic residues.

Belongs to the protein kinase superfamily. STE Ser/Thr protein kinase family. MAP kinase kinase kinase subfamily. As to quaternary structure, interacts with, and is activated by, tap-1. Mg(2+) serves as cofactor. Post-translationally, may be autophosphorylated.

The catalysed reaction is L-seryl-[protein] + ATP = O-phospho-L-seryl-[protein] + ADP + H(+). It carries out the reaction L-threonyl-[protein] + ATP = O-phospho-L-threonyl-[protein] + ADP + H(+). Functionally, part of the Wnt signaling pathway essential for the specification of the mesodermal cell fate in early embryos. Stimulates the wrm-1/lit-1-dependent phosphorylation of pop-1 and plays a role in the initial nuclear accumulation of wrm-1. The polypeptide is Mitogen-activated protein kinase kinase kinase mom-4 (Caenorhabditis elegans).